We begin with the raw amino-acid sequence, 444 residues long: Glutamyl-tRNA reductase (444 aa).

Substrate contacts are provided by residues 49-52 (TCNR), Ser109, 114-116 (ETQ), and Gln120. Cys50 (nucleophile) is an active-site residue. 189-194 (GAGKMG) serves as a coordination point for NADP(+).

It belongs to the glutamyl-tRNA reductase family. In terms of assembly, homodimer.

The enzyme catalyses (S)-4-amino-5-oxopentanoate + tRNA(Glu) + NADP(+) = L-glutamyl-tRNA(Glu) + NADPH + H(+). It participates in porphyrin-containing compound metabolism; protoporphyrin-IX biosynthesis; 5-aminolevulinate from L-glutamyl-tRNA(Glu): step 1/2. In terms of biological role, catalyzes the NADPH-dependent reduction of glutamyl-tRNA(Glu) to glutamate 1-semialdehyde (GSA). The protein is Glutamyl-tRNA reductase of Bacillus cereus (strain AH187).